A 91-amino-acid polypeptide reads, in one-letter code: Elongation factor 1-beta (91 aa).

This sequence belongs to the EF-1-beta/EF-1-delta family.

Its function is as follows. Promotes the exchange of GDP for GTP in EF-1-alpha/GDP, thus allowing the regeneration of EF-1-alpha/GTP that could then be used to form the ternary complex EF-1-alpha/GTP/AAtRNA. The sequence is that of Elongation factor 1-beta from Metallosphaera sedula (strain ATCC 51363 / DSM 5348 / JCM 9185 / NBRC 15509 / TH2).